The following is a 269-amino-acid chain: 4-hydroxy-tetrahydrodipicolinate reductase (269 aa).

NAD(+) contacts are provided by residues 13-18 (GASGRM) and aspartate 39. Arginine 40 serves as a coordination point for NADP(+). NAD(+) is bound by residues 101 to 103 (GTT) and 125 to 128 (APNM). Histidine 158 acts as the Proton donor/acceptor in catalysis. Histidine 159 is a binding site for (S)-2,3,4,5-tetrahydrodipicolinate. Lysine 162 (proton donor) is an active-site residue. Position 168-169 (168-169 (GT)) interacts with (S)-2,3,4,5-tetrahydrodipicolinate.

It belongs to the DapB family.

The protein localises to the cytoplasm. It catalyses the reaction (S)-2,3,4,5-tetrahydrodipicolinate + NAD(+) + H2O = (2S,4S)-4-hydroxy-2,3,4,5-tetrahydrodipicolinate + NADH + H(+). The enzyme catalyses (S)-2,3,4,5-tetrahydrodipicolinate + NADP(+) + H2O = (2S,4S)-4-hydroxy-2,3,4,5-tetrahydrodipicolinate + NADPH + H(+). It participates in amino-acid biosynthesis; L-lysine biosynthesis via DAP pathway; (S)-tetrahydrodipicolinate from L-aspartate: step 4/4. In terms of biological role, catalyzes the conversion of 4-hydroxy-tetrahydrodipicolinate (HTPA) to tetrahydrodipicolinate. This chain is 4-hydroxy-tetrahydrodipicolinate reductase, found in Bordetella pertussis (strain Tohama I / ATCC BAA-589 / NCTC 13251).